The primary structure comprises 451 residues: uncharacterized protein (451 aa).

A TRAM domain is found at 1–59; it reads MLKKNDIVEVEISDLSHDGAGIAKVDGLVFFVDNALPTEKIRMRVLKVKKNIAFGKVES. S-adenosyl-L-methionine-binding residues include Q283, Y312, E333, and D381. The active-site Nucleophile is the C408.

This sequence belongs to the class I-like SAM-binding methyltransferase superfamily. RNA M5U methyltransferase family.

This is an uncharacterized protein from Streptococcus mutans serotype c (strain ATCC 700610 / UA159).